Consider the following 203-residue polypeptide: ATP-dependent Clp protease proteolytic subunit 2 (203 aa).

Catalysis depends on serine 98, which acts as the Nucleophile. Histidine 123 is an active-site residue.

It belongs to the peptidase S14 family. In terms of assembly, fourteen ClpP subunits assemble into 2 heptameric rings which stack back to back to give a disk-like structure with a central cavity, resembling the structure of eukaryotic proteasomes.

It localises to the cytoplasm. It carries out the reaction Hydrolysis of proteins to small peptides in the presence of ATP and magnesium. alpha-casein is the usual test substrate. In the absence of ATP, only oligopeptides shorter than five residues are hydrolyzed (such as succinyl-Leu-Tyr-|-NHMec, and Leu-Tyr-Leu-|-Tyr-Trp, in which cleavage of the -Tyr-|-Leu- and -Tyr-|-Trp bonds also occurs).. Functionally, cleaves peptides in various proteins in a process that requires ATP hydrolysis. Has a chymotrypsin-like activity. Plays a major role in the degradation of misfolded proteins. This chain is ATP-dependent Clp protease proteolytic subunit 2, found in Chlamydia trachomatis serovar A (strain ATCC VR-571B / DSM 19440 / HAR-13).